The chain runs to 50 residues: MTLHHKLVLSMLLGLSITPEGDLPLSGQDIFYQYSFSSFYNIHDERIREQ.

This is an uncharacterized protein from Saccharomyces cerevisiae (strain ATCC 204508 / S288c) (Baker's yeast).